The sequence spans 130 residues: Small ribosomal subunit protein uS9 (130 aa).

The protein belongs to the universal ribosomal protein uS9 family.

In Colwellia psychrerythraea (strain 34H / ATCC BAA-681) (Vibrio psychroerythus), this protein is Small ribosomal subunit protein uS9.